Here is a 288-residue protein sequence, read N- to C-terminus: ATP synthase gamma chain (288 aa).

Belongs to the ATPase gamma chain family. F-type ATPases have 2 components, CF(1) - the catalytic core - and CF(0) - the membrane proton channel. CF(1) has five subunits: alpha(3), beta(3), gamma(1), delta(1), epsilon(1). CF(0) has three main subunits: a, b and c.

The protein localises to the cell inner membrane. In terms of biological role, produces ATP from ADP in the presence of a proton gradient across the membrane. The gamma chain is believed to be important in regulating ATPase activity and the flow of protons through the CF(0) complex. The chain is ATP synthase gamma chain from Acidithiobacillus ferrooxidans (strain ATCC 23270 / DSM 14882 / CIP 104768 / NCIMB 8455) (Ferrobacillus ferrooxidans (strain ATCC 23270)).